The chain runs to 338 residues: MTLTFKPLESYREDFSFRNSPAAIARFPFPFPEDQYMYSVNLEPAVSRDPGSVFEHQFDVDEHYVSEMAERARVLELDPGRCLVMPHMAQAAWDTLAMLMEHLARDYPQHFRLTRQGDAWHWQNLALGIDQRFTFGDPASLPCEPLEYITRQMQGDFAVLDQRDGDLFMDAGMVTCPADWSLRFDAGMSFKQWHSPVPMAHQMGVFDRALKYLLNIQVGAPVRRLNWTLTINPRLDTSPETYHEWGNDRGKVTPDNVGRLVHLRVELQLMARLPRSNALLFGIRTYLISLDELVSNPAWAQRLHRVMRDLPDPIADYKGITRYRQTLVDWLRRFDPEA.

Heme b contacts are provided by Tyr-38 and His-194. Catalysis depends on Arg-224, which acts as the Proton donor. Asn-226 serves as a coordination point for heme b. Glu-266 provides a ligand contact to dimethylamine. Heme b-binding residues include Tyr-317 and Lys-318.

In terms of assembly, the heme-dependent oxidative N-demethylase (HODM) is a heterotetramer composed of a catalytic alpha subunit, a FMN/2Fe-2S-dependent oxidoreductase beta subunit, a gamma subunit with putative aminotransferase activity, and a delta subunit of unknown function.

It carries out the reaction dimethylamine + NADPH + O2 + H(+) = methylamine + formaldehyde + NADP(+) + H2O. Functionally, component of the heme-dependent oxidative N-demethylase (HODM) enzyme, that catalyzes the NADPH-dependent oxidation of dimethylamine (DMA) to methylamine (MA) and formaldehyde. Functions in bacterial methylated amine catabolism, linking alkylamine oxidation to the tetrahydrofolate C1 pool. The alpha subunit of HODM binds heme, oxygen and DMA, and serves as the site of the oxidative N-demethylase activity. The chain is Heme-dependent oxidative N-demethylase alpha subunit from Ectopseudomonas mendocina (strain ymp) (Pseudomonas mendocina).